The following is a 155-amino-acid chain: Ribonuclease H (155 aa).

Residues M1–M142 enclose the RNase H type-1 domain. Positions 10, 48, 70, and 134 each coordinate Mg(2+).

The protein belongs to the RNase H family. In terms of assembly, monomer. It depends on Mg(2+) as a cofactor.

The protein localises to the cytoplasm. The enzyme catalyses Endonucleolytic cleavage to 5'-phosphomonoester.. Functionally, endonuclease that specifically degrades the RNA of RNA-DNA hybrids. The chain is Ribonuclease H from Escherichia coli (strain 55989 / EAEC).